An 87-amino-acid chain; its full sequence is Mitochondrial import inner membrane translocase subunit TIM9 (87 aa).

The residue at position 1 (M1) is an N-acetylmethionine. The Twin CX3C motif motif lies at 35-59 (CFTDCVNDFTTSKLTNKEQTCIMKC). 2 disulfide bridges follow: C35–C59 and C39–C55.

The protein belongs to the small Tim family. Heterohexamer; composed of 3 copies of TIM9 and 3 copies of TIM10, named soluble 70 kDa complex. Associates with the TIM12 component of the TIM22 complex, whose core is composed of TIM18, TIM22 and TIM54. Interacts with the transmembrane regions of multi-pass transmembrane proteins in transit.

Its subcellular location is the mitochondrion inner membrane. The protein resides in the mitochondrion intermembrane space. Mitochondrial intermembrane chaperone that participates in the import and insertion of multi-pass transmembrane proteins into the mitochondrial inner membrane. Also required for the transfer of beta-barrel precursors from the TOM complex to the sorting and assembly machinery (SAM complex) of the outer membrane. Acts as a chaperone-like protein that protects the hydrophobic precursors from aggregation and guide them through the mitochondrial intermembrane space. Compared to TIM10, it may have a strong structural role. The protein is Mitochondrial import inner membrane translocase subunit TIM9 (TIM9) of Saccharomyces cerevisiae (strain ATCC 204508 / S288c) (Baker's yeast).